The primary structure comprises 348 residues: Holliday junction branch migration complex subunit RuvB (348 aa).

The large ATPase domain (RuvB-L) stretch occupies residues 4-186; that stretch reads TDRIISANTA…FGIIQRLEFY (183 aa). ATP contacts are provided by residues Ile-25, Arg-26, Gly-67, Lys-70, Thr-71, Thr-72, 133-135, Arg-176, Tyr-186, and Arg-223; that span reads EDY. Thr-71 contributes to the Mg(2+) binding site. A small ATPAse domain (RuvB-S) region spans residues 187–257; sequence SIDDLSKIVY…IADKALSMLK (71 aa). The interval 260-348 is head domain (RuvB-H); it reads PVGFDHMDHR…SADQQQTLSI (89 aa). DNA-binding residues include Arg-315 and Arg-320.

This sequence belongs to the RuvB family. In terms of assembly, homohexamer. Forms an RuvA(8)-RuvB(12)-Holliday junction (HJ) complex. HJ DNA is sandwiched between 2 RuvA tetramers; dsDNA enters through RuvA and exits via RuvB. An RuvB hexamer assembles on each DNA strand where it exits the tetramer. Each RuvB hexamer is contacted by two RuvA subunits (via domain III) on 2 adjacent RuvB subunits; this complex drives branch migration. In the full resolvosome a probable DNA-RuvA(4)-RuvB(12)-RuvC(2) complex forms which resolves the HJ.

It is found in the cytoplasm. The catalysed reaction is ATP + H2O = ADP + phosphate + H(+). In terms of biological role, the RuvA-RuvB-RuvC complex processes Holliday junction (HJ) DNA during genetic recombination and DNA repair, while the RuvA-RuvB complex plays an important role in the rescue of blocked DNA replication forks via replication fork reversal (RFR). RuvA specifically binds to HJ cruciform DNA, conferring on it an open structure. The RuvB hexamer acts as an ATP-dependent pump, pulling dsDNA into and through the RuvAB complex. RuvB forms 2 homohexamers on either side of HJ DNA bound by 1 or 2 RuvA tetramers; 4 subunits per hexamer contact DNA at a time. Coordinated motions by a converter formed by DNA-disengaged RuvB subunits stimulates ATP hydrolysis and nucleotide exchange. Immobilization of the converter enables RuvB to convert the ATP-contained energy into a lever motion, pulling 2 nucleotides of DNA out of the RuvA tetramer per ATP hydrolyzed, thus driving DNA branch migration. The RuvB motors rotate together with the DNA substrate, which together with the progressing nucleotide cycle form the mechanistic basis for DNA recombination by continuous HJ branch migration. Branch migration allows RuvC to scan DNA until it finds its consensus sequence, where it cleaves and resolves cruciform DNA. The protein is Holliday junction branch migration complex subunit RuvB of Francisella tularensis subsp. tularensis (strain FSC 198).